The following is a 200-amino-acid chain: Glycerol-3-phosphate acyltransferase (200 aa).

The next 5 membrane-spanning stretches (helical) occupy residues 2-22 (FNIPAVAVSYLIGSLSFAVIV), 51-71 (KAAALTLLGDAAKGLVAVLLA), 84-104 (AIAAVALAALVGHMWPVFFGF), 114-134 (LGVLLALSPATALVCALIWLV), and 158-178 (LFFMPHTSWIFATLAIAILVL).

The protein belongs to the PlsY family. Probably interacts with PlsX.

It is found in the cell inner membrane. The enzyme catalyses an acyl phosphate + sn-glycerol 3-phosphate = a 1-acyl-sn-glycero-3-phosphate + phosphate. Its pathway is lipid metabolism; phospholipid metabolism. Catalyzes the transfer of an acyl group from acyl-phosphate (acyl-PO(4)) to glycerol-3-phosphate (G3P) to form lysophosphatidic acid (LPA). This enzyme utilizes acyl-phosphate as fatty acyl donor, but not acyl-CoA or acyl-ACP. In Neisseria gonorrhoeae (strain ATCC 700825 / FA 1090), this protein is Glycerol-3-phosphate acyltransferase.